Reading from the N-terminus, the 450-residue chain is Phosphoglucosamine mutase (450 aa).

Residue S101 is the Phosphoserine intermediate of the active site. Mg(2+) contacts are provided by S101, D241, D243, and D245. The residue at position 101 (S101) is a Phosphoserine.

Belongs to the phosphohexose mutase family. Requires Mg(2+) as cofactor. Activated by phosphorylation.

It catalyses the reaction alpha-D-glucosamine 1-phosphate = D-glucosamine 6-phosphate. Its function is as follows. Catalyzes the conversion of glucosamine-6-phosphate to glucosamine-1-phosphate. This Listeria monocytogenes serotype 4b (strain F2365) protein is Phosphoglucosamine mutase.